The primary structure comprises 218 residues: MSSMQETIINAFNFRHATKEFDPEKKVSESDFHTILETGRLSPSSLGLEPWRFVVIENEDLKEKLKPYSWGAQKQLNTASRFVIILARKNVTADSEYVQHIIRGIKKYEESTIPAVEDKFNNFQTNFHINDNERTLLDWASKQTYIALANMMTSAALLGIDSCPMEGFDLDKVTEILAEENVVDTEHFAPSVMVAFGYRKEEPKDKVRQPAEDVIEWI.

It belongs to the nitroreductase family. The cofactor is FMN.

The protein is Putative NAD(P)H nitroreductase SH0546 of Staphylococcus haemolyticus (strain JCSC1435).